A 380-amino-acid chain; its full sequence is Alcohol dehydrogenase 1 (380 aa).

The Zn(2+) site is built by Cys48, Thr50, His70, Cys100, Cys103, Cys106, Cys114, and Cys178. An alcohol contacts are provided by Thr50 and His70. Residue Thr50 participates in NAD(+) binding. NAD(+) is bound by residues 203-208, Asp227, Arg232, Thr273, Val296, 296-298, and Arg373; these read GLGAVG and VGV.

It belongs to the zinc-containing alcohol dehydrogenase family. As to quaternary structure, homodimer. Requires Zn(2+) as cofactor.

Its subcellular location is the cytoplasm. It catalyses the reaction a primary alcohol + NAD(+) = an aldehyde + NADH + H(+). The enzyme catalyses a secondary alcohol + NAD(+) = a ketone + NADH + H(+). This Pisum sativum (Garden pea) protein is Alcohol dehydrogenase 1.